We begin with the raw amino-acid sequence, 88 residues long: U24 protein (88 aa).

Thr6 carries the phosphothreonine modification. The PPXY motif motif lies at Pro8–Tyr11. Residues Phe58–Ile78 form a helical membrane-spanning segment.

In terms of assembly, interacts with host ITCH; this interaction probably mediates ITCH degradation. Interacts probably with NEDD4.

It localises to the membrane. Its function is as follows. Down-regulates the TCR/CD3E complex and the transferrin receptor TFRC in host T-cells by blocking them from recycling back to the cell surface. The protein is U24 protein (U24) of Human herpesvirus 6B (strain Z29) (HHV-6 variant B).